A 728-amino-acid chain; its full sequence is Phosphoribosylformylglycinamidine synthase subunit PurL (728 aa).

His-42 is an active-site residue. The ATP site is built by Tyr-45 and Lys-84. Residue Glu-86 coordinates Mg(2+). Substrate contacts are provided by residues 87-90 (SHNH) and Arg-109. His-88 acts as the Proton acceptor in catalysis. Asp-110 lines the Mg(2+) pocket. Gln-237 contacts substrate. Asp-265 serves as a coordination point for Mg(2+). 309–311 (ESQ) lines the substrate pocket. 2 residues coordinate ATP: Asp-491 and Gly-528. Mg(2+) is bound at residue Asn-529. Ser-531 lines the substrate pocket.

The protein belongs to the FGAMS family. Monomer. Part of the FGAM synthase complex composed of 1 PurL, 1 PurQ and 2 PurS subunits.

It is found in the cytoplasm. The catalysed reaction is N(2)-formyl-N(1)-(5-phospho-beta-D-ribosyl)glycinamide + L-glutamine + ATP + H2O = 2-formamido-N(1)-(5-O-phospho-beta-D-ribosyl)acetamidine + L-glutamate + ADP + phosphate + H(+). It functions in the pathway purine metabolism; IMP biosynthesis via de novo pathway; 5-amino-1-(5-phospho-D-ribosyl)imidazole from N(2)-formyl-N(1)-(5-phospho-D-ribosyl)glycinamide: step 1/2. In terms of biological role, part of the phosphoribosylformylglycinamidine synthase complex involved in the purines biosynthetic pathway. Catalyzes the ATP-dependent conversion of formylglycinamide ribonucleotide (FGAR) and glutamine to yield formylglycinamidine ribonucleotide (FGAM) and glutamate. The FGAM synthase complex is composed of three subunits. PurQ produces an ammonia molecule by converting glutamine to glutamate. PurL transfers the ammonia molecule to FGAR to form FGAM in an ATP-dependent manner. PurS interacts with PurQ and PurL and is thought to assist in the transfer of the ammonia molecule from PurQ to PurL. This Campylobacter jejuni (strain RM1221) protein is Phosphoribosylformylglycinamidine synthase subunit PurL.